Reading from the N-terminus, the 96-residue chain is Aspartyl/glutamyl-tRNA(Asn/Gln) amidotransferase subunit C (96 aa).

This sequence belongs to the GatC family. Heterotrimer of A, B and C subunits.

It carries out the reaction L-glutamyl-tRNA(Gln) + L-glutamine + ATP + H2O = L-glutaminyl-tRNA(Gln) + L-glutamate + ADP + phosphate + H(+). The enzyme catalyses L-aspartyl-tRNA(Asn) + L-glutamine + ATP + H2O = L-asparaginyl-tRNA(Asn) + L-glutamate + ADP + phosphate + 2 H(+). Allows the formation of correctly charged Asn-tRNA(Asn) or Gln-tRNA(Gln) through the transamidation of misacylated Asp-tRNA(Asn) or Glu-tRNA(Gln) in organisms which lack either or both of asparaginyl-tRNA or glutaminyl-tRNA synthetases. The reaction takes place in the presence of glutamine and ATP through an activated phospho-Asp-tRNA(Asn) or phospho-Glu-tRNA(Gln). The chain is Aspartyl/glutamyl-tRNA(Asn/Gln) amidotransferase subunit C from Wolinella succinogenes (strain ATCC 29543 / DSM 1740 / CCUG 13145 / JCM 31913 / LMG 7466 / NCTC 11488 / FDC 602W) (Vibrio succinogenes).